Reading from the N-terminus, the 274-residue chain is Large ribosomal subunit protein uL2 (274 aa).

Disordered stretches follow at residues 37–59 and 222–262; these read KAKNGGRNNNGRITTRHKGGGHK and GAAM…RTNK. Positions 50 to 59 are enriched in basic residues; the sequence is TTRHKGGGHK.

The protein belongs to the universal ribosomal protein uL2 family. As to quaternary structure, part of the 50S ribosomal subunit. Forms a bridge to the 30S subunit in the 70S ribosome.

One of the primary rRNA binding proteins. Required for association of the 30S and 50S subunits to form the 70S ribosome, for tRNA binding and peptide bond formation. It has been suggested to have peptidyltransferase activity; this is somewhat controversial. Makes several contacts with the 16S rRNA in the 70S ribosome. The polypeptide is Large ribosomal subunit protein uL2 (Alcanivorax borkumensis (strain ATCC 700651 / DSM 11573 / NCIMB 13689 / SK2)).